The following is a 172-amino-acid chain: Signal peptidase complex catalytic subunit SEC11 (172 aa).

The Cytoplasmic portion of the chain corresponds to M1–Q14. A helical; Signal-anchor for type II membrane protein transmembrane segment spans residues L15–I35. The Lumenal segment spans residues T36–E172. Catalysis depends on charge relay system residues S49, H90, and D115. A C-terminal short (CTS) helix region spans residues V158–L169.

It belongs to the peptidase S26B family. As to quaternary structure, component of the signal peptidase complex (SPC) composed of a catalytic subunit SEC11 and three accessory subunits SPC1, SPC2 and SPC3. The complex induces a local thinning of the ER membrane which is used to measure the length of the signal peptide (SP) h-region of protein substrates. This ensures the selectivity of the complex towards h-regions shorter than 18-20 amino acids. SPC associates with the translocon complex.

The protein resides in the endoplasmic reticulum membrane. It carries out the reaction Cleavage of hydrophobic, N-terminal signal or leader sequences from secreted and periplasmic proteins.. Catalytic component of the signal peptidase complex (SPC) which catalyzes the cleavage of N-terminal signal sequences from nascent proteins as they are translocated into the lumen of the endoplasmic reticulum. Specifically cleaves N-terminal signal peptides that contain a hydrophobic alpha-helix (h-region) shorter than 18-20 amino acids. This Chaetomium globosum (strain ATCC 6205 / CBS 148.51 / DSM 1962 / NBRC 6347 / NRRL 1970) (Soil fungus) protein is Signal peptidase complex catalytic subunit SEC11 (SEC11).